Consider the following 73-residue polypeptide: Conotoxin CnIIIF (73 aa).

Positions 1–19 (MSKLGVLLTICLLLFPLTA) are cleaved as a signal peptide. Residues 20–51 (LPMDGDQSVDRPAERMQDDISSGQHPLFNQKR) constitute a propeptide that is removed on maturation. 3 disulfides stabilise this stretch: C53–C72, C54–C70, and C60–C73.

The protein belongs to the conotoxin M superfamily. In terms of tissue distribution, expressed by the venom duct.

The protein resides in the secreted. In terms of biological role, shows a paralytic effect in fish. This Conus consors (Singed cone) protein is Conotoxin CnIIIF.